The following is a 195-amino-acid chain: MPLHIDAVILAGGMARRMGGDDKGLVELNGQPMIKHTIDRIKPQVKEILINANRNQTRYAEFGFKVISDEHSGFLGPLAGMLAALGQTKADYLLTVPCDSPQLPMDLVERMLNAIETKGADMAVASNGEQEQPVVLLMKPSLRDSMEAFLKAGDRKILLWYAKQNYAVATFADQPNAFMNINTLEEKQQFALDQT.

GTP contacts are provided by residues 10–12 (LAG), K23, N51, D69, and D99. D99 contributes to the Mg(2+) binding site.

Belongs to the MobA family. Monomer. It depends on Mg(2+) as a cofactor.

It localises to the cytoplasm. It catalyses the reaction Mo-molybdopterin + GTP + H(+) = Mo-molybdopterin guanine dinucleotide + diphosphate. Its function is as follows. Transfers a GMP moiety from GTP to Mo-molybdopterin (Mo-MPT) cofactor (Moco or molybdenum cofactor) to form Mo-molybdopterin guanine dinucleotide (Mo-MGD) cofactor. The polypeptide is Molybdenum cofactor guanylyltransferase (Shewanella putrefaciens (strain CN-32 / ATCC BAA-453)).